A 525-amino-acid polypeptide reads, in one-letter code: C6 finger transcription factor fsqA (525 aa).

A DNA-binding region (zn(2)-C6 fungal-type) is located at residues 12–53 (CDRCRGQKLRCVGAGKPIPNSSSRLLRNEIPCDRCRRAKVEC). Disordered regions lie at residues 80–142 (RSSS…LGDM), 204–260 (EWNS…EPAG), and 327–371 (RARS…ARSS). The segment covering 95–115 (PPNSLVTAASKPHPNSLSFNH) has biased composition (polar residues). A compositionally biased stretch (polar residues) spans 327 to 337 (RARSQWSSLPE).

The protein resides in the nucleus. Transcription factor that regulates the expression of the gene cluster that mediates the biosynthesis of the isoquinoline alkaloids fumisoquin A, fumisoquin B and fumisoquin C; as well as small amounts of fumipyrrole as a shunt metabolite. The products of the cluster lead to a brown coloration and are important for growth and conidiation. In Aspergillus fumigatus (strain ATCC MYA-4609 / CBS 101355 / FGSC A1100 / Af293) (Neosartorya fumigata), this protein is C6 finger transcription factor fsqA.